The chain runs to 729 residues: Fatty acid oxidation complex subunit alpha (729 aa).

The tract at residues 1–189 (MLYKGDTLYL…KIGLVDGVVK (189 aa)) is enoyl-CoA hydratase/isomerase. A substrate-binding site is contributed by Asp296. The 3-hydroxyacyl-CoA dehydrogenase stretch occupies residues 311–729 (ETPKQAAVLG…ARPVGDLKTA (419 aa)). Residues Met324, Asp343, 400–402 (VVE), Lys407, and Ser429 each bind NAD(+). The active-site For 3-hydroxyacyl-CoA dehydrogenase activity is His450. Residue Asn453 participates in NAD(+) binding. 2 residues coordinate substrate: Asn500 and Tyr660. The disordered stretch occupies residues 708 to 729 (RHNEPYYPPVEPARPVGDLKTA).

It in the N-terminal section; belongs to the enoyl-CoA hydratase/isomerase family. This sequence in the C-terminal section; belongs to the 3-hydroxyacyl-CoA dehydrogenase family. Heterotetramer of two alpha chains (FadB) and two beta chains (FadA).

It catalyses the reaction a (3S)-3-hydroxyacyl-CoA + NAD(+) = a 3-oxoacyl-CoA + NADH + H(+). The enzyme catalyses a (3S)-3-hydroxyacyl-CoA = a (2E)-enoyl-CoA + H2O. It carries out the reaction a 4-saturated-(3S)-3-hydroxyacyl-CoA = a (3E)-enoyl-CoA + H2O. The catalysed reaction is (3S)-3-hydroxybutanoyl-CoA = (3R)-3-hydroxybutanoyl-CoA. It catalyses the reaction a (3Z)-enoyl-CoA = a 4-saturated (2E)-enoyl-CoA. The enzyme catalyses a (3E)-enoyl-CoA = a 4-saturated (2E)-enoyl-CoA. It functions in the pathway lipid metabolism; fatty acid beta-oxidation. Functionally, involved in the aerobic and anaerobic degradation of long-chain fatty acids via beta-oxidation cycle. Catalyzes the formation of 3-oxoacyl-CoA from enoyl-CoA via L-3-hydroxyacyl-CoA. It can also use D-3-hydroxyacyl-CoA and cis-3-enoyl-CoA as substrate. This chain is Fatty acid oxidation complex subunit alpha, found in Citrobacter koseri (strain ATCC BAA-895 / CDC 4225-83 / SGSC4696).